The following is a 457-amino-acid chain: Multidrug resistance protein MdtK (457 aa).

12 helical membrane-spanning segments follow: residues 11–31, 53–73, 93–113, 127–147, 160–180, 188–208, 243–263, 276–296, 314–334, 357–377, 387–407, and 418–438; these read LLALAIPVILAQVAQTAMGFV, IWLPAILFGHGLLLALTPVIA, WLASFVSVLVMIVLWNAGYII, AVGYLRALLWGAPGYLFFQVA, GMVMGFLGLLVNIPVNYIFIY, LGGIGCGVATAAVYWVMFIAM, LPIALALFFEVTLFAVVALLV, IALNFSSLMFVLPMSLAAAVT, AARTGLSVGVCMAVVTAIFTV, LMLLAAVYQISDSIQVIGSGI, IFFITFTAYWVLGLPSGYILA, and PAGFWMGFIIGLTSAAVLMML.

This sequence belongs to the multi antimicrobial extrusion (MATE) (TC 2.A.66.1) family. MdtK subfamily.

Its subcellular location is the cell inner membrane. Multidrug efflux pump that functions probably as a Na(+)/drug antiporter. The sequence is that of Multidrug resistance protein MdtK from Salmonella arizonae (strain ATCC BAA-731 / CDC346-86 / RSK2980).